Here is a 128-residue protein sequence, read N- to C-terminus: Diacylglycerol kinase (128 aa).

Position 34 (Glu-34) interacts with a divalent metal cation. 2 consecutive transmembrane segments (helical) span residues 35-55 (SAFRQIVILALFCIVLASYLA) and 58-78 (FLEWGLLILPCFLSVVVELIN). Glu-75 serves as the catalytic Proton acceptor. Position 82 (Glu-82) interacts with a divalent metal cation. A helical membrane pass occupies residues 107-127 (QLIGLIFWTLIWGRYLLALYL).

This sequence belongs to the bacterial diacylglycerol kinase family. Mg(2+) serves as cofactor.

The protein resides in the cell inner membrane. It catalyses the reaction a 1,2-diacyl-sn-glycerol + ATP = a 1,2-diacyl-sn-glycero-3-phosphate + ADP + H(+). Catalyzes the ATP-dependent phosphorylation of sn-l,2-diacylglycerol (DAG) to phosphatidic acid. Involved in the recycling of diacylglycerol produced as a by-product during membrane-derived oligosaccharide (MDO) biosynthesis. This is Diacylglycerol kinase (dgkA) from Helicobacter pylori (strain ATCC 700392 / 26695) (Campylobacter pylori).